Consider the following 406-residue polypeptide: Tyrosine--tRNA ligase (406 aa).

Residue tyrosine 35 coordinates L-tyrosine. The short motif at 40–49 (PTADSLHVGH) is the 'HIGH' region element. Residues tyrosine 168 and glutamine 172 each contribute to the L-tyrosine site. The 'KMSKS' region motif lies at 228 to 232 (KMGKT). Residue lysine 231 coordinates ATP. Residues 340 to 404 (LPILDVMAST…RGKKNYNKIE (65 aa)) enclose the S4 RNA-binding domain.

It belongs to the class-I aminoacyl-tRNA synthetase family. TyrS type 1 subfamily. As to quaternary structure, homodimer.

It is found in the cytoplasm. It carries out the reaction tRNA(Tyr) + L-tyrosine + ATP = L-tyrosyl-tRNA(Tyr) + AMP + diphosphate + H(+). Its function is as follows. Catalyzes the attachment of tyrosine to tRNA(Tyr) in a two-step reaction: tyrosine is first activated by ATP to form Tyr-AMP and then transferred to the acceptor end of tRNA(Tyr). This Clostridium beijerinckii (strain ATCC 51743 / NCIMB 8052) (Clostridium acetobutylicum) protein is Tyrosine--tRNA ligase.